Here is a 196-residue protein sequence, read N- to C-terminus: Ribosome maturation factor RimP (196 aa).

Positions 176–196 are disordered; it reads ETNFDEVSTELETDTPSEGDQ. A compositionally biased stretch (acidic residues) spans 177 to 196; the sequence is TNFDEVSTELETDTPSEGDQ.

This sequence belongs to the RimP family.

The protein resides in the cytoplasm. Functionally, required for maturation of 30S ribosomal subunits. The sequence is that of Ribosome maturation factor RimP from Roseobacter denitrificans (strain ATCC 33942 / OCh 114) (Erythrobacter sp. (strain OCh 114)).